The chain runs to 786 residues: Endonuclease MutS2 (786 aa).

Position 335–342 (335–342 (GPNTGGKT)) interacts with ATP. Positions 711–786 (LDLRGERFEN…GLGVTVVELK (76 aa)) constitute a Smr domain.

Belongs to the DNA mismatch repair MutS family. MutS2 subfamily. As to quaternary structure, homodimer. Binds to stalled ribosomes, contacting rRNA.

Functionally, endonuclease that is involved in the suppression of homologous recombination and thus may have a key role in the control of bacterial genetic diversity. Its function is as follows. Acts as a ribosome collision sensor, splitting the ribosome into its 2 subunits. Detects stalled/collided 70S ribosomes which it binds and splits by an ATP-hydrolysis driven conformational change. Acts upstream of the ribosome quality control system (RQC), a ribosome-associated complex that mediates the extraction of incompletely synthesized nascent chains from stalled ribosomes and their subsequent degradation. Probably generates substrates for RQC. This Bacillus thuringiensis (strain Al Hakam) protein is Endonuclease MutS2.